A 224-amino-acid polypeptide reads, in one-letter code: Urease accessory protein UreF (224 aa).

Belongs to the UreF family. In terms of assembly, ureD, UreF and UreG form a complex that acts as a GTP-hydrolysis-dependent molecular chaperone, activating the urease apoprotein by helping to assemble the nickel containing metallocenter of UreC. The UreE protein probably delivers the nickel.

The protein resides in the cytoplasm. In terms of biological role, required for maturation of urease via the functional incorporation of the urease nickel metallocenter. This Nitrosococcus oceani (strain ATCC 19707 / BCRC 17464 / JCM 30415 / NCIMB 11848 / C-107) protein is Urease accessory protein UreF.